The chain runs to 482 residues: Putative alpha-L-fucosidase (482 aa).

Positions 1 to 16 (MIFLIFSILFLHLANC) are cleaved as a signal peptide. Asn182, Asn343, Asn359, and Asn419 each carry an N-linked (GlcNAc...) asparagine glycan.

This sequence belongs to the glycosyl hydrolase 29 family.

It catalyses the reaction an alpha-L-fucoside + H2O = L-fucose + an alcohol. Alpha-L-fucosidase is responsible for hydrolyzing the alpha-1,6-linked fucose joined to the reducing-end N-acetylglucosamine of the carbohydrate moieties of glycoproteins. In Caenorhabditis elegans, this protein is Putative alpha-L-fucosidase.